Consider the following 290-residue polypeptide: UPF0761 membrane protein ASA_4118 (290 aa).

6 helical membrane-spanning segments follow: residues Leu48–Phe68, Asn104–Ile124, Phe144–Ile164, Ile182–Val202, Ala216–Ile236, and Ala250–Leu270.

Belongs to the UPF0761 family.

The protein resides in the cell inner membrane. The protein is UPF0761 membrane protein ASA_4118 of Aeromonas salmonicida (strain A449).